A 188-amino-acid polypeptide reads, in one-letter code: Pyridoxal 5'-phosphate synthase subunit PdxT (188 aa).

47–49 (GES) serves as a coordination point for L-glutamine. Catalysis depends on Cys-79, which acts as the Nucleophile. Residues Arg-106 and 134 to 135 (IR) contribute to the L-glutamine site. Residues His-169 and Glu-171 each act as charge relay system in the active site.

This sequence belongs to the glutaminase PdxT/SNO family. In the presence of PdxS, forms a dodecamer of heterodimers. Only shows activity in the heterodimer.

It carries out the reaction aldehydo-D-ribose 5-phosphate + D-glyceraldehyde 3-phosphate + L-glutamine = pyridoxal 5'-phosphate + L-glutamate + phosphate + 3 H2O + H(+). It catalyses the reaction L-glutamine + H2O = L-glutamate + NH4(+). Its pathway is cofactor biosynthesis; pyridoxal 5'-phosphate biosynthesis. Catalyzes the hydrolysis of glutamine to glutamate and ammonia as part of the biosynthesis of pyridoxal 5'-phosphate. The resulting ammonia molecule is channeled to the active site of PdxS. This is Pyridoxal 5'-phosphate synthase subunit PdxT from Caldicellulosiruptor saccharolyticus (strain ATCC 43494 / DSM 8903 / Tp8T 6331).